Here is a 157-residue protein sequence, read N- to C-terminus: Small ribosomal subunit protein uS7 (157 aa).

The protein belongs to the universal ribosomal protein uS7 family. In terms of assembly, part of the 30S ribosomal subunit. Contacts proteins S9 and S11.

Its function is as follows. One of the primary rRNA binding proteins, it binds directly to 16S rRNA where it nucleates assembly of the head domain of the 30S subunit. Is located at the subunit interface close to the decoding center, probably blocks exit of the E-site tRNA. The sequence is that of Small ribosomal subunit protein uS7 from Hydrogenovibrio crunogenus (strain DSM 25203 / XCL-2) (Thiomicrospira crunogena).